Here is a 177-residue protein sequence, read N- to C-terminus: Alkyl hydroperoxide reductase AhpD (177 aa).

Cys-130 serves as the catalytic Proton donor. Cys-130 and Cys-133 are joined by a disulfide. Cys-133 (cysteine sulfenic acid (-SOH) intermediate) is an active-site residue.

This sequence belongs to the AhpD family. Homotrimer.

The catalysed reaction is N(6)-[(R)-dihydrolipoyl]-L-lysyl-[lipoyl-carrier protein] + a hydroperoxide = N(6)-[(R)-lipoyl]-L-lysyl-[lipoyl-carrier protein] + an alcohol + H2O. In terms of biological role, antioxidant protein with alkyl hydroperoxidase activity. Required for the reduction of the AhpC active site cysteine residues and for the regeneration of the AhpC enzyme activity. This chain is Alkyl hydroperoxide reductase AhpD, found in Mycobacterium bovis (strain ATCC BAA-935 / AF2122/97).